The sequence spans 101 residues: Small ribosomal subunit protein uS14 (101 aa).

The protein belongs to the universal ribosomal protein uS14 family. In terms of assembly, part of the 30S ribosomal subunit. Contacts proteins S3 and S10.

Functionally, binds 16S rRNA, required for the assembly of 30S particles and may also be responsible for determining the conformation of the 16S rRNA at the A site. The sequence is that of Small ribosomal subunit protein uS14 from Baumannia cicadellinicola subsp. Homalodisca coagulata.